Reading from the N-terminus, the 92-residue chain is Co-chaperonin GroES (92 aa).

Belongs to the GroES chaperonin family. Heptamer of 7 subunits arranged in a ring. Interacts with the chaperonin GroEL.

The protein resides in the cytoplasm. Its function is as follows. Together with the chaperonin GroEL, plays an essential role in assisting protein folding. The GroEL-GroES system forms a nano-cage that allows encapsulation of the non-native substrate proteins and provides a physical environment optimized to promote and accelerate protein folding. GroES binds to the apical surface of the GroEL ring, thereby capping the opening of the GroEL channel. This chain is Co-chaperonin GroES, found in Thermotoga neapolitana.